The following is a 480-amino-acid chain: tRNA modification GTPase MnmE (480 aa).

Positions 20, 114, and 154 each coordinate (6S)-5-formyl-5,6,7,8-tetrahydrofolate. The TrmE-type G domain occupies 250-406; sequence GLKLAIIGPP…ILKNIENIAE (157 aa). Asn-260 serves as a coordination point for K(+). GTP is bound by residues 260 to 265, 279 to 285, and 304 to 307; these read NVGKSS, SNIAGTT, and DTAG. Mg(2+) is bound at residue Ser-264. The K(+) site is built by Ser-279, Ile-281, and Thr-284. Mg(2+) is bound at residue Thr-285. Position 480 (Lys-480) interacts with (6S)-5-formyl-5,6,7,8-tetrahydrofolate.

Belongs to the TRAFAC class TrmE-Era-EngA-EngB-Septin-like GTPase superfamily. TrmE GTPase family. As to quaternary structure, homodimer. Heterotetramer of two MnmE and two MnmG subunits. It depends on K(+) as a cofactor.

The protein localises to the cytoplasm. Its function is as follows. Exhibits a very high intrinsic GTPase hydrolysis rate. Involved in the addition of a carboxymethylaminomethyl (cmnm) group at the wobble position (U34) of certain tRNAs, forming tRNA-cmnm(5)s(2)U34. The chain is tRNA modification GTPase MnmE from Rickettsia felis (strain ATCC VR-1525 / URRWXCal2) (Rickettsia azadi).